Reading from the N-terminus, the 640-residue chain is ATP-dependent rRNA helicase spb4 (640 aa).

The Q motif signature appears at 14–42 (WDAVTPALSEWVLEAMSSMGFTRMTPVQA). The Helicase ATP-binding domain occupies 45–249 (IPLFMAHKDV…RVGLRNPVKV (205 aa)). 58–65 (AVTGSGKT) serves as a coordination point for ATP. The DEAD box motif lies at 197–200 (DEAD). In terms of domain architecture, Helicase C-terminal spans 283 to 437 (ALKRILSSVQ…LITFSDADAA (155 aa)). Residues 521–629 (AYKDKQREKR…AAKAAGAKAD (109 aa)) are a coiled coil. Disordered stretches follow at residues 531-595 (RKEL…EKQK) and 607-640 (RKKNEEERRLRRAAAKAAGAKADGDDEEEFQGFD). The segment covering 568–582 (KKLKRREQKKSKHEK) has biased composition (basic residues). The segment covering 583–595 (ARWEKMTEEEKQK) has biased composition (basic and acidic residues). The segment covering 630–640 (GDDEEEFQGFD) has biased composition (acidic residues).

It belongs to the DEAD box helicase family. DDX55/SPB4 subfamily. As to quaternary structure, component of pre-60S ribosomal complexes.

The protein localises to the nucleus. The protein resides in the nucleolus. It catalyses the reaction ATP + H2O = ADP + phosphate + H(+). In terms of biological role, ATP-binding RNA helicase involved in the biogenesis of 60S ribosomal subunits. Binds 90S pre-ribosomal particles and dissociates from pre-60S ribosomal particles after processing of 27SB pre-rRNA. Required for the normal formation of 18S rRNA through the processing of pre-rRNAs at sites A0, A1 and A2, and the normal formation of 25S and 5.8S rRNAs through the processing of pre-rRNAs at sites C1 and C2. The polypeptide is ATP-dependent rRNA helicase spb4 (Neosartorya fischeri (strain ATCC 1020 / DSM 3700 / CBS 544.65 / FGSC A1164 / JCM 1740 / NRRL 181 / WB 181) (Aspergillus fischerianus)).